Here is a 129-residue protein sequence, read N- to C-terminus: Small ribosomal subunit protein uS9 (129 aa).

The protein belongs to the universal ribosomal protein uS9 family.

This Helicobacter pylori (strain Shi470) protein is Small ribosomal subunit protein uS9.